Reading from the N-terminus, the 439-residue chain is tRNA-2-methylthio-N(6)-dimethylallyladenosine synthase (439 aa).

One can recognise an MTTase N-terminal domain in the interval 5–121 (KKLFIKTYGC…LPELEAKTRA (117 aa)). Residues C14, C50, C84, C159, C163, and C166 each coordinate [4Fe-4S] cluster. A Radical SAM core domain is found at 145–378 (AKRGPTAFLT…ITRHQREIQD (234 aa)). In terms of domain architecture, TRAM spans 378–439 (DGMVGREVSV…GANSLAGELA (62 aa)).

This sequence belongs to the methylthiotransferase family. MiaB subfamily. As to quaternary structure, monomer. The cofactor is [4Fe-4S] cluster.

Its subcellular location is the cytoplasm. The enzyme catalyses N(6)-dimethylallyladenosine(37) in tRNA + (sulfur carrier)-SH + AH2 + 2 S-adenosyl-L-methionine = 2-methylsulfanyl-N(6)-dimethylallyladenosine(37) in tRNA + (sulfur carrier)-H + 5'-deoxyadenosine + L-methionine + A + S-adenosyl-L-homocysteine + 2 H(+). Catalyzes the methylthiolation of N6-(dimethylallyl)adenosine (i(6)A), leading to the formation of 2-methylthio-N6-(dimethylallyl)adenosine (ms(2)i(6)A) at position 37 in tRNAs that read codons beginning with uridine. The sequence is that of tRNA-2-methylthio-N(6)-dimethylallyladenosine synthase from Ruegeria pomeroyi (strain ATCC 700808 / DSM 15171 / DSS-3) (Silicibacter pomeroyi).